The sequence spans 200 residues: NADH-quinone oxidoreductase subunit C 1 (200 aa).

This sequence belongs to the complex I 30 kDa subunit family. NDH-1 is composed of 14 different subunits. Subunits NuoB, C, D, E, F, and G constitute the peripheral sector of the complex.

The protein localises to the cell inner membrane. It catalyses the reaction a quinone + NADH + 5 H(+)(in) = a quinol + NAD(+) + 4 H(+)(out). Its function is as follows. NDH-1 shuttles electrons from NADH, via FMN and iron-sulfur (Fe-S) centers, to quinones in the respiratory chain. The immediate electron acceptor for the enzyme in this species is believed to be ubiquinone. Couples the redox reaction to proton translocation (for every two electrons transferred, four hydrogen ions are translocated across the cytoplasmic membrane), and thus conserves the redox energy in a proton gradient. This Rhizobium etli (strain CIAT 652) protein is NADH-quinone oxidoreductase subunit C 1.